Here is a 617-residue protein sequence, read N- to C-terminus: Erythritol-mannosyl-transferase 1 (617 aa).

Disordered regions lie at residues 365 to 396 and 567 to 617; these read RNPG…IDSR and RQRK…VTNP. Residues 371–381 show a composition bias toward polar residues; the sequence is GFTSPLNSPTA. Positions 386–396 are enriched in basic and acidic residues; that stretch reads KWDEKRPIDSR. A compositionally biased stretch (polar residues) spans 578 to 603; sequence TAKTSLSVDTTEVATPTFTDTETSLS.

The protein belongs to the UDP-glycosyltransferase family.

It functions in the pathway secondary metabolite biosynthesis. Glycosyltransferase; part of the gene cluster that mediates the biosynthesis of mannosylerythritol lipids (MELs), surface-active substances that enhance the availability of water-insoluble substrates. Depending on the number of acetyl groups, mannosylerythritol lipids can be differentiated into MEL A (fully acetylated), MEL B and MEL C (monoacetylated at R-6 and R-4, respectively), and the fully deacetylated MEL D. The first step in the pathway is the generation of mannosylerythritol by the glycosyltransferase EMT1 which catalyzes the transfer of GDP-mannose to the C-4 atom of meso-erythritol. This reaction has to be stereospecific, since only mannosyl-D-erythritol is generated. The produced disaccharide is subsequently acylated with fatty acids of various lengths by the acyltransferases MAC1 and MAC2 at positions C-2 and C-3, repectively. The existence of MEL derivatives which carry an acetyl group at C-2 implies that at least MAC1 also accepts acetyl-CoA as a donor. The final step of MEL biosynthesis is the acetylation of the fully acylated mannosylerythritol lipids catalyzed by the acetyl-CoA-dependent acetyltransferase MAT1. MAT1 displays a relaxed regioselectivity and is able to transfer acetylgroups to both positions C-4 and C-6 of the mannosyl moiety. This chain is Erythritol-mannosyl-transferase 1, found in Pseudozyma antarctica (strain T-34) (Yeast).